A 362-amino-acid polypeptide reads, in one-letter code: Peptide chain release factor 1 (362 aa).

Gln237 carries the post-translational modification N5-methylglutamine.

This sequence belongs to the prokaryotic/mitochondrial release factor family. In terms of processing, methylated by PrmC. Methylation increases the termination efficiency of RF1.

Its subcellular location is the cytoplasm. Its function is as follows. Peptide chain release factor 1 directs the termination of translation in response to the peptide chain termination codons UAG and UAA. The polypeptide is Peptide chain release factor 1 (Legionella pneumophila (strain Corby)).